The following is a 521-amino-acid chain: Bifunctional purine biosynthesis protein PurH (521 aa).

Positions 1–145 constitute an MGS-like domain; that stretch reads MIKQALISVS…KNHRDVTVVV (145 aa).

Belongs to the PurH family.

The enzyme catalyses (6R)-10-formyltetrahydrofolate + 5-amino-1-(5-phospho-beta-D-ribosyl)imidazole-4-carboxamide = 5-formamido-1-(5-phospho-D-ribosyl)imidazole-4-carboxamide + (6S)-5,6,7,8-tetrahydrofolate. It catalyses the reaction IMP + H2O = 5-formamido-1-(5-phospho-D-ribosyl)imidazole-4-carboxamide. It functions in the pathway purine metabolism; IMP biosynthesis via de novo pathway; 5-formamido-1-(5-phospho-D-ribosyl)imidazole-4-carboxamide from 5-amino-1-(5-phospho-D-ribosyl)imidazole-4-carboxamide (10-formyl THF route): step 1/1. Its pathway is purine metabolism; IMP biosynthesis via de novo pathway; IMP from 5-formamido-1-(5-phospho-D-ribosyl)imidazole-4-carboxamide: step 1/1. The sequence is that of Bifunctional purine biosynthesis protein PurH from Burkholderia lata (strain ATCC 17760 / DSM 23089 / LMG 22485 / NCIMB 9086 / R18194 / 383).